The following is a 241-amino-acid chain: MRSGVIAQKLGMTRIFTDAGEHLPVTVLKVESCQVVAHRTLDKNGYVAVQLGAGKRKPKNTNKAERGQFARAEVEPKRKLAEFRVDADALIPVGAEITADHFVVGQYVDVTGTTIGKGFAGGMKRHNFGGLRASHGVSISHRSIGSTGGRQDPGKTFKNKKMPGHMGDVTVTTQNLKVVMTDVERGLIAVEGAVPGHAGGWIMVRDAVKKRLPSEAPKPGAFKLRETAGAVAAEATNEEGA.

The interval 140–168 (SHRSIGSTGGRQDPGKTFKNKKMPGHMGD) is disordered. Glutamine 151 is modified (N5-methylglutamine).

This sequence belongs to the universal ribosomal protein uL3 family. As to quaternary structure, part of the 50S ribosomal subunit. Forms a cluster with proteins L14 and L19. Methylated by PrmB.

Functionally, one of the primary rRNA binding proteins, it binds directly near the 3'-end of the 23S rRNA, where it nucleates assembly of the 50S subunit. The sequence is that of Large ribosomal subunit protein uL3 from Azorhizobium caulinodans (strain ATCC 43989 / DSM 5975 / JCM 20966 / LMG 6465 / NBRC 14845 / NCIMB 13405 / ORS 571).